Reading from the N-terminus, the 308-residue chain is Aspartate carbamoyltransferase catalytic subunit (308 aa).

Positions 51 and 52 each coordinate carbamoyl phosphate. Lys80 provides a ligand contact to L-aspartate. Positions 101, 129, and 132 each coordinate carbamoyl phosphate. Residues Arg162 and Arg224 each coordinate L-aspartate. Carbamoyl phosphate-binding residues include Leu263 and Pro264.

The protein belongs to the aspartate/ornithine carbamoyltransferase superfamily. ATCase family. Heterododecamer (2C3:3R2) of six catalytic PyrB chains organized as two trimers (C3), and six regulatory PyrI chains organized as three dimers (R2).

The catalysed reaction is carbamoyl phosphate + L-aspartate = N-carbamoyl-L-aspartate + phosphate + H(+). It participates in pyrimidine metabolism; UMP biosynthesis via de novo pathway; (S)-dihydroorotate from bicarbonate: step 2/3. Functionally, catalyzes the condensation of carbamoyl phosphate and aspartate to form carbamoyl aspartate and inorganic phosphate, the committed step in the de novo pyrimidine nucleotide biosynthesis pathway. In Bacteroides fragilis (strain ATCC 25285 / DSM 2151 / CCUG 4856 / JCM 11019 / LMG 10263 / NCTC 9343 / Onslow / VPI 2553 / EN-2), this protein is Aspartate carbamoyltransferase catalytic subunit.